Here is a 285-residue protein sequence, read N- to C-terminus: Protease HtpX homolog (285 aa).

A run of 2 helical transmembrane segments spans residues 7–27 (TAML…MIGG) and 30–50 (GMTI…WFSD). His-131 serves as a coordination point for Zn(2+). The active site involves Glu-132. Residue His-135 participates in Zn(2+) binding. A run of 2 helical transmembrane segments spans residues 146-166 (ITAT…FFGG) and 177-197 (IAGI…QMAI). Glu-202 is a Zn(2+) binding site.

The protein belongs to the peptidase M48B family. The cofactor is Zn(2+).

It is found in the cell inner membrane. This chain is Protease HtpX homolog, found in Burkholderia cenocepacia (strain HI2424).